The chain runs to 365 residues: Phosphoserine aminotransferase (365 aa).

Position 40 (Arg40) interacts with L-glutamate. Pyridoxal 5'-phosphate is bound by residues 74–75, Phe99, Thr155, Asp177, and Gln200; that span reads AS. N6-(pyridoxal phosphate)lysine is present on Lys201. A pyridoxal 5'-phosphate-binding site is contributed by 241 to 242; sequence NT.

The protein belongs to the class-V pyridoxal-phosphate-dependent aminotransferase family. SerC subfamily. In terms of assembly, homodimer. Pyridoxal 5'-phosphate is required as a cofactor.

It is found in the cytoplasm. It carries out the reaction O-phospho-L-serine + 2-oxoglutarate = 3-phosphooxypyruvate + L-glutamate. It catalyses the reaction 4-(phosphooxy)-L-threonine + 2-oxoglutarate = (R)-3-hydroxy-2-oxo-4-phosphooxybutanoate + L-glutamate. Its pathway is amino-acid biosynthesis; L-serine biosynthesis; L-serine from 3-phospho-D-glycerate: step 2/3. Catalyzes the reversible conversion of 3-phosphohydroxypyruvate to phosphoserine and of 3-hydroxy-2-oxo-4-phosphonooxybutanoate to phosphohydroxythreonine. In Lactococcus lactis subsp. lactis (strain IL1403) (Streptococcus lactis), this protein is Phosphoserine aminotransferase.